Here is a 161-residue protein sequence, read N- to C-terminus: 2-C-methyl-D-erythritol 2,4-cyclodiphosphate synthase (161 aa).

A divalent metal cation contacts are provided by D11 and H13. 4-CDP-2-C-methyl-D-erythritol 2-phosphate contacts are provided by residues 11-13 and 37-38; these read DIH and HS. H45 contacts a divalent metal cation. 4-CDP-2-C-methyl-D-erythritol 2-phosphate-binding positions include 59–61, 135–138, and R145; these read DIG and TTNE.

This sequence belongs to the IspF family. As to quaternary structure, homotrimer. Requires a divalent metal cation as cofactor.

It catalyses the reaction 4-CDP-2-C-methyl-D-erythritol 2-phosphate = 2-C-methyl-D-erythritol 2,4-cyclic diphosphate + CMP. Its pathway is isoprenoid biosynthesis; isopentenyl diphosphate biosynthesis via DXP pathway; isopentenyl diphosphate from 1-deoxy-D-xylulose 5-phosphate: step 4/6. In terms of biological role, involved in the biosynthesis of isopentenyl diphosphate (IPP) and dimethylallyl diphosphate (DMAPP), two major building blocks of isoprenoid compounds. Catalyzes the conversion of 4-diphosphocytidyl-2-C-methyl-D-erythritol 2-phosphate (CDP-ME2P) to 2-C-methyl-D-erythritol 2,4-cyclodiphosphate (ME-CPP) with a corresponding release of cytidine 5-monophosphate (CMP). This chain is 2-C-methyl-D-erythritol 2,4-cyclodiphosphate synthase, found in Thermosynechococcus vestitus (strain NIES-2133 / IAM M-273 / BP-1).